Consider the following 558-residue polypeptide: Atlastin-1 (558 aa).

Residues 1–29 form a disordered region; that stretch reads MAKSRRDRNSWGGFSEKSSDWSSEEEEPV. Residues 1-34 are N-terminal hypervariable region (HVR); it reads MAKSRRDRNSWGGFSEKSSDWSSEEEEPVRKAGP. Over 1–449 the chain is Cytoplasmic; that stretch reads MAKSRRDRNS…NIFHAARTPA (449 aa). A phosphoserine mark is found at S10, S22, and S23. The GB1/RHD3-type G domain maps to 64–309; the sequence is DKEVVAVSVA…LIPWLLSPES (246 aa). GDP-binding residues include R77, K78, G79, K80, S81, F82, Q148, R217, D218, V276, and N279. The GTP site is built by R77, K78, G79, K80, S81, and F82. S81 contacts Mg(2+). GTP contacts are provided by R217, D218, and V276. Residues 347–438 are 3HB (three-helix bundle) domain; that stretch reads MLQATAEANN…YIQYIKHNDS (92 aa). K395 is subject to N6-acetyllysine. Positions 412–439 form a coiled coil; sequence EFSRRYLQQLESEIDELYIQYIKHNDSK. The linker stretch occupies residues 439–447; the sequence is KNIFHAART. A helical transmembrane segment spans residues 450–470; that stretch reads TLFVVIFITYVIAGVTGFIGL. A topological domain (lumenal) is located at residue D471. Residues 472 to 492 traverse the membrane as a helical segment; that stretch reads IIASLCNMIMGLTLITLCTWA. At 493–558 the chain is on the cytoplasmic side; that stretch reads YIRYSGEYRE…PTEQPEKKKI (66 aa). The autoinhibitory domain stretch occupies residues 521-558; that stretch reads NEALYKLYSAAATHRHLYQQAFPAPKSEPTEQPEKKKI.

It belongs to the TRAFAC class dynamin-like GTPase superfamily. GB1/RHD3 GTPase family. GB1 subfamily. In terms of assembly, monomeric and homodimeric. The homodimer, transiently formed by two molecules on opposing membranes, is the active form mediating ER membrane fusion. Interacts with REEP1, REEP5, RTN3 and RTN4 (via the transmembrane region); these proteins are involved in endoplasmic reticulum tubular network organization. Interacts with ZFYVE27; both proteins are involved in endoplasmic reticulum tubular network organization. Interacts with ARL6IP1; both proteins are involved in endoplasmic reticulum tubular network organization. Interacts with SPAST; the interaction is direct, could recruit SPAST to Golgi membranes. Interacts (via N-terminal region) with MAP4K4 (via CNH regulatory domain). May interact with TMED2. Interacts with CPT1C. In terms of processing, phosphorylated. Phosphorylation, by different kinases, of the N-terminal hypervariable region (HVR) regulates the ATL1-mediated membrane tethering step. Detected in brain where it is abundant in lamina V of the cerebral cortex. Also expressed within the hippocampus, mainly in pyramidal neurons in CA1 and CA3. Weakly expressed in the striatum and more robustly in amygdala and several thalamic nuclei. Also detected in several mesopontine nuclei (at protein level).

It is found in the endoplasmic reticulum membrane. It localises to the golgi apparatus membrane. Its subcellular location is the cell projection. The protein localises to the axon. It carries out the reaction GTP + H2O = GDP + phosphate + H(+). In terms of biological role, atlastin-1 (ATL1) is a membrane-anchored GTPase that mediates the GTP-dependent fusion of endoplasmic reticulum (ER) membranes, maintaining the continuous ER network. It facilitates the formation of three-way junctions where ER tubules intersect. Two atlastin-1 on neighboring ER tubules bind GTP and form loose homodimers through the GB1/RHD3-type G domains and 3HB regions. Upon GTP hydrolysis, the 3HB regions tighten, pulling the membranes together to drive their fusion. After fusion, the homodimer disassembles upon release of inorganic phosphate (Pi). Subsequently, GDP dissociates, resetting the monomers to a conformation ready for a new fusion cycle. May also regulate more or less directly Golgi biogenesis. Indirectly regulates axonal development. The chain is Atlastin-1 from Rattus norvegicus (Rat).